Reading from the N-terminus, the 398-residue chain is S-adenosylmethionine synthase (398 aa).

136–141 lines the ATP pocket; it reads GTGSSD.

This sequence belongs to the AdoMet synthase 2 family. It depends on Mg(2+) as a cofactor.

The enzyme catalyses L-methionine + ATP + H2O = S-adenosyl-L-methionine + phosphate + diphosphate. Its pathway is amino-acid biosynthesis; S-adenosyl-L-methionine biosynthesis; S-adenosyl-L-methionine from L-methionine: step 1/1. In terms of biological role, catalyzes the formation of S-adenosylmethionine from methionine and ATP. The polypeptide is S-adenosylmethionine synthase (Methanosarcina mazei (strain ATCC BAA-159 / DSM 3647 / Goe1 / Go1 / JCM 11833 / OCM 88) (Methanosarcina frisia)).